A 131-amino-acid polypeptide reads, in one-letter code: MHKVQLIIKLLLQLGIIIVITYIGTEIQKIFHLPLAGSIVGLFLFYLLLQFKIVPLTWVEDGANFLLKTMVFFFIPSVVGIMDVASEITLNYILFFAVIIIGTCIVALSSGYIAEKMSVKHKHRKGVDAYE.

4 helical membrane-spanning segments follow: residues 4–24, 30–50, 65–85, and 88–108; these read VQLI…TYIG, IFHL…LLLQ, FLLK…MDVA, and ITLN…IVAL.

Belongs to the CidA/LrgA family. CidA subfamily.

The protein resides in the cell membrane. Functionally, increases the activity of extracellular murein hydrolases possibly by mediating their export via hole formation. Inhibited by the antiholin-like proteins LrgAB. In an unstressed cell, the LrgAB products probably inhibit the function of the CidAB proteins. When a cell is stressed by the addition of antibiotics or by other factors in the environment, the CidAB proteins possibly oligomerize within the bacterial cell membrane, creating lesions that disrupt the proton motive force, which in turn results in loss of cell viability. These lesions are also hypothesized to regulate the subsequent cell lysis by either allowing the murein hydrolases access to the cell wall substrate and/or regulating their activity by a possible change in the cell wall pH that results from loss of membrane potential. The protein is Holin-like protein CidA of Staphylococcus aureus (strain Mu3 / ATCC 700698).